Here is a 290-residue protein sequence, read N- to C-terminus: Proteasome subunit beta (290 aa).

Positions 1-58 (MTTSGGLTGPGAFGRLPQPFHQPGITSFVEFLALQAPDLLPGRLQMPAGGQPPEVPHG) are cleaved as a propeptide — removed in mature form; by autocatalysis. Thr-59 (nucleophile) is an active-site residue.

The protein belongs to the peptidase T1B family. The 20S proteasome core is composed of 14 alpha and 14 beta subunits that assemble into four stacked heptameric rings, resulting in a barrel-shaped structure. The two inner rings, each composed of seven catalytic beta subunits, are sandwiched by two outer rings, each composed of seven alpha subunits. The catalytic chamber with the active sites is on the inside of the barrel. Has a gated structure, the ends of the cylinder being occluded by the N-termini of the alpha-subunits. Is capped by the proteasome-associated ATPase, ARC.

The protein resides in the cytoplasm. The enzyme catalyses Cleavage of peptide bonds with very broad specificity.. Its pathway is protein degradation; proteasomal Pup-dependent pathway. The formation of the proteasomal ATPase ARC-20S proteasome complex, likely via the docking of the C-termini of ARC into the intersubunit pockets in the alpha-rings, may trigger opening of the gate for substrate entry. Interconversion between the open-gate and close-gate conformations leads to a dynamic regulation of the 20S proteasome proteolysis activity. Its function is as follows. Component of the proteasome core, a large protease complex with broad specificity involved in protein degradation. The sequence is that of Proteasome subunit beta from Acidothermus cellulolyticus (strain ATCC 43068 / DSM 8971 / 11B).